Consider the following 93-residue polypeptide: U11-ctenitoxin-Pn1a (93 aa).

A signal peptide spans 1–21 (MKCAVLFLSVIALVHIFVVEA). Residues 22–34 (EEEPDSDALVPQE) constitute a propeptide that is removed on maturation. Disulfide bonds link Cys-37-Cys-51, Cys-44-Cys-57, Cys-50-Cys-75, Cys-59-Cys-73, and Cys-83-Cys-90.

Belongs to the neurotoxin 09 (Tx3-6) family. In terms of tissue distribution, expressed by the venom gland.

It localises to the secreted. Its function is as follows. Probable neurotoxin. This chain is U11-ctenitoxin-Pn1a, found in Phoneutria nigriventer (Brazilian armed spider).